The primary structure comprises 129 residues: Cytochrome c oxidase subunit 13, mitochondrial (129 aa).

The transit peptide at 1–9 directs the protein to the mitochondrion; it reads MFRQCAKRY. The Mitochondrial matrix portion of the chain corresponds to 10–43; the sequence is ASSLPPNALKPAFGPPDKVAAQKFKESLMATEKH. A helical transmembrane segment spans residues 44 to 71; that stretch reads AKDTSNMWVKISVWVALPAIALTAVNTY. The Mitochondrial intermembrane portion of the chain corresponds to 72–129; sequence FVEKEHAEHREHLKHVPDSEWPRDYEFMNIRSKPFFWGDGDKTLFWNPVVNRHIEHDD.

It belongs to the cytochrome c oxidase subunit 6A family. As to quaternary structure, component of the cytochrome c oxidase (complex IV, CIV), a multisubunit enzyme composed of 12 subunits. The complex is composed of a catalytic core of 3 subunits COX1, COX2 and COX3, encoded in the mitochondrial DNA, and 9 supernumerary subunits COX4, COX5A (or COX5B), COX6, COX7, COX8, COX9, COX12, COX13 and COX26, which are encoded in the nuclear genome. The complex exists as a monomer or a dimer and forms supercomplexes (SCs) in the inner mitochondrial membrane with a dimer of ubiquinol-cytochrome c oxidoreductase (cytochrome b-c1 complex, complex III, CIII), resulting in 2 different assemblies (supercomplexes III(2)IV and III(2)IV(2)). COX13 interacts with COX1 and COX3 on the intermembrane space (IMS) and COX4 on the matrix side.

Its subcellular location is the mitochondrion inner membrane. It functions in the pathway energy metabolism; oxidative phosphorylation. In terms of biological role, component of the cytochrome c oxidase, the last enzyme in the mitochondrial electron transport chain which drives oxidative phosphorylation. The respiratory chain contains 3 multisubunit complexes succinate dehydrogenase (complex II, CII), ubiquinol-cytochrome c oxidoreductase (cytochrome b-c1 complex, complex III, CIII) and cytochrome c oxidase (complex IV, CIV), that cooperate to transfer electrons derived from NADH and succinate to molecular oxygen, creating an electrochemical gradient over the inner membrane that drives transmembrane transport and the ATP synthase. Cytochrome c oxidase is the component of the respiratory chain that catalyzes the reduction of oxygen to water. Electrons originating from reduced cytochrome c in the intermembrane space (IMS) are transferred via the dinuclear copper A center (CU(A)) of COX2 and heme A of COX1 to the active site in COX1, a binuclear center (BNC) formed by heme A3 and copper B (CU(B)). The BNC reduces molecular oxygen to 2 water molecules using 4 electrons from cytochrome c in the IMS and 4 protons from the mitochondrial matrix. The polypeptide is Cytochrome c oxidase subunit 13, mitochondrial (COX13) (Saccharomyces cerevisiae (strain ATCC 204508 / S288c) (Baker's yeast)).